The primary structure comprises 904 residues: Alanine--tRNA ligase (904 aa).

Positions 594, 598, 695, and 699 each coordinate Zn(2+).

It belongs to the class-II aminoacyl-tRNA synthetase family. The cofactor is Zn(2+).

The protein resides in the cytoplasm. The catalysed reaction is tRNA(Ala) + L-alanine + ATP = L-alanyl-tRNA(Ala) + AMP + diphosphate. Its function is as follows. Catalyzes the attachment of alanine to tRNA(Ala) in a two-step reaction: alanine is first activated by ATP to form Ala-AMP and then transferred to the acceptor end of tRNA(Ala). Also edits incorrectly charged Ser-tRNA(Ala) and Gly-tRNA(Ala) via its editing domain. This Anaeromyxobacter sp. (strain Fw109-5) protein is Alanine--tRNA ligase.